The primary structure comprises 401 residues: Acetate kinase (401 aa).

Mg(2+) is bound at residue N9. An ATP-binding site is contributed by K16. R88 contributes to the substrate binding site. D147 functions as the Proton donor/acceptor in the catalytic mechanism. Residues 207-211 (HLGNG), 282-284 (DCR), and 333-337 (GIGEN) contribute to the ATP site. A Mg(2+)-binding site is contributed by E388.

It belongs to the acetokinase family. As to quaternary structure, homodimer. Requires Mg(2+) as cofactor. Mn(2+) is required as a cofactor.

It is found in the cytoplasm. It catalyses the reaction acetate + ATP = acetyl phosphate + ADP. It participates in metabolic intermediate biosynthesis; acetyl-CoA biosynthesis; acetyl-CoA from acetate: step 1/2. Its function is as follows. Catalyzes the formation of acetyl phosphate from acetate and ATP. Can also catalyze the reverse reaction. In Haemophilus influenzae (strain PittEE), this protein is Acetate kinase.